The chain runs to 116 residues: MAGLLKKTTGLVGLAVCETPHERLKILYTKILDVLGHIPKNAAYRKYTEQITNEKLSMVKAEPDVKKLEERLQGGQIEEVILQAENELSLARKMIQWKPWEPLVEEPPASQWKWPI.

Position 2 is an N-acetylalanine (alanine 2). Lysine 30, lysine 46, and lysine 60 each carry N6-acetyllysine. A Phosphoserine modification is found at serine 89. Lysine 98 bears the N6-acetyllysine; alternate mark. The residue at position 98 (lysine 98) is an N6-succinyllysine; alternate.

The protein belongs to the complex I NDUFA5 subunit family. As to quaternary structure, complex I is composed of 45 different subunits.

It is found in the mitochondrion inner membrane. Functionally, accessory subunit of the mitochondrial membrane respiratory chain NADH dehydrogenase (Complex I), that is believed not to be involved in catalysis. Complex I functions in the transfer of electrons from NADH to the respiratory chain. The immediate electron acceptor for the enzyme is believed to be ubiquinone. In Bos taurus (Bovine), this protein is NADH dehydrogenase [ubiquinone] 1 alpha subcomplex subunit 5 (NDUFA5).